Here is a 190-residue protein sequence, read N- to C-terminus: Small ribosomal subunit protein uS5 (190 aa).

Residues 22-85 (FVDKLVHINR…ESAKRNLTRV (64 aa)) form the S5 DRBM domain.

This sequence belongs to the universal ribosomal protein uS5 family. Part of the 30S ribosomal subunit. Contacts proteins S4 and S8.

In terms of biological role, with S4 and S12 plays an important role in translational accuracy. Functionally, located at the back of the 30S subunit body where it stabilizes the conformation of the head with respect to the body. The chain is Small ribosomal subunit protein uS5 from Rhodopseudomonas palustris (strain BisA53).